The following is a 276-amino-acid chain: tRNA (guanine-N(7)-)-methyltransferase (276 aa).

The tract at residues 1 to 23 (MRPDPAPLDPTDASPAQARRHQP) is disordered. S-adenosyl-L-methionine-binding residues include Glu-103, Glu-128, Asp-155, and Asp-178. Asp-178 is a catalytic residue. Residues Lys-182, Asp-214, and 252–255 (TRYE) contribute to the substrate site.

This sequence belongs to the class I-like SAM-binding methyltransferase superfamily. TrmB family.

It catalyses the reaction guanosine(46) in tRNA + S-adenosyl-L-methionine = N(7)-methylguanosine(46) in tRNA + S-adenosyl-L-homocysteine. It functions in the pathway tRNA modification; N(7)-methylguanine-tRNA biosynthesis. Functionally, catalyzes the formation of N(7)-methylguanine at position 46 (m7G46) in tRNA. The chain is tRNA (guanine-N(7)-)-methyltransferase from Cutibacterium acnes (strain DSM 16379 / KPA171202) (Propionibacterium acnes).